We begin with the raw amino-acid sequence, 279 residues long: 4-hydroxy-3-methylbut-2-enyl diphosphate reductase (279 aa).

A [4Fe-4S] cluster-binding site is contributed by Cys12. The (2E)-4-hydroxy-3-methylbut-2-enyl diphosphate site is built by His40 and His70. Dimethylallyl diphosphate contacts are provided by His40 and His70. The isopentenyl diphosphate site is built by His40 and His70. Cys92 contacts [4Fe-4S] cluster. His119 contributes to the (2E)-4-hydroxy-3-methylbut-2-enyl diphosphate binding site. His119 is a dimethylallyl diphosphate binding site. Residue His119 participates in isopentenyl diphosphate binding. The Proton donor role is filled by Glu121. (2E)-4-hydroxy-3-methylbut-2-enyl diphosphate is bound at residue Thr151. Residue Cys181 coordinates [4Fe-4S] cluster. (2E)-4-hydroxy-3-methylbut-2-enyl diphosphate-binding residues include Ser209, Ser210, Asn211, and Ser251. Ser209, Ser210, Asn211, and Ser251 together coordinate dimethylallyl diphosphate. The isopentenyl diphosphate site is built by Ser209, Ser210, Asn211, and Ser251.

The protein belongs to the IspH family. [4Fe-4S] cluster is required as a cofactor.

The enzyme catalyses isopentenyl diphosphate + 2 oxidized [2Fe-2S]-[ferredoxin] + H2O = (2E)-4-hydroxy-3-methylbut-2-enyl diphosphate + 2 reduced [2Fe-2S]-[ferredoxin] + 2 H(+). The catalysed reaction is dimethylallyl diphosphate + 2 oxidized [2Fe-2S]-[ferredoxin] + H2O = (2E)-4-hydroxy-3-methylbut-2-enyl diphosphate + 2 reduced [2Fe-2S]-[ferredoxin] + 2 H(+). It participates in isoprenoid biosynthesis; dimethylallyl diphosphate biosynthesis; dimethylallyl diphosphate from (2E)-4-hydroxy-3-methylbutenyl diphosphate: step 1/1. The protein operates within isoprenoid biosynthesis; isopentenyl diphosphate biosynthesis via DXP pathway; isopentenyl diphosphate from 1-deoxy-D-xylulose 5-phosphate: step 6/6. Functionally, catalyzes the conversion of 1-hydroxy-2-methyl-2-(E)-butenyl 4-diphosphate (HMBPP) into a mixture of isopentenyl diphosphate (IPP) and dimethylallyl diphosphate (DMAPP). Acts in the terminal step of the DOXP/MEP pathway for isoprenoid precursor biosynthesis. This Thermotoga neapolitana (strain ATCC 49049 / DSM 4359 / NBRC 107923 / NS-E) protein is 4-hydroxy-3-methylbut-2-enyl diphosphate reductase.